Consider the following 251-residue polypeptide: Pyrroloquinoline-quinone synthase (251 aa).

It belongs to the PqqC family.

The enzyme catalyses 6-(2-amino-2-carboxyethyl)-7,8-dioxo-1,2,3,4,7,8-hexahydroquinoline-2,4-dicarboxylate + 3 O2 = pyrroloquinoline quinone + 2 H2O2 + 2 H2O + H(+). The protein operates within cofactor biosynthesis; pyrroloquinoline quinone biosynthesis. In terms of biological role, ring cyclization and eight-electron oxidation of 3a-(2-amino-2-carboxyethyl)-4,5-dioxo-4,5,6,7,8,9-hexahydroquinoline-7,9-dicarboxylic-acid to PQQ. In Pseudomonas putida (strain W619), this protein is Pyrroloquinoline-quinone synthase.